The chain runs to 32 residues: Jingzhaotoxin F4-32.60 (32 aa).

3 disulfides stabilise this stretch: Cys-2-Cys-17, Cys-9-Cys-22, and Cys-16-Cys-29. Asp-31 is modified (aspartic acid 1-amide).

The protein belongs to the neurotoxin 10 (Hwtx-1) family. 30 (Jztx-14) subfamily. Post-translationally, amidated as well as non-amidated forms are found in the venom. Expressed by the venom gland.

Its subcellular location is the secreted. Its function is as follows. Probable ion channel inhibitor. The chain is Jingzhaotoxin F4-32.60 from Chilobrachys guangxiensis (Chinese earth tiger tarantula).